The sequence spans 238 residues: MGAKQSGPAANGRTRAYSGSDLPSGTGSGGGGADGARAARFAAPVSGAQQPSASAGAAAAAAAAASAPAAPRSRSLGGAVGSASGGRAAQSAFSIPSAGGGGGPYGSQDSVHSSPEDSVGARDRDRPAGGGPGGPRLVIGSLPAHLSPHLFGGFKCPVCSKFVPSDEMDLHLVMCLTKPRITYNEDVLSKDTGECAICLEELQQGDTIARLPCLCIYHKGCIDEWFEVNRSCPEHPSD.

The disordered stretch occupies residues 1-137; sequence MGAKQSGPAA…AGGGPGGPRL (137 aa). Gly-2 carries N-myristoyl glycine lipidation. A phosphoserine mark is found at Ser-20, Ser-24, Ser-75, Ser-82, Ser-107, Ser-110, Ser-141, Ser-147, and Ser-189. Residues 35–77 are compositionally biased toward low complexity; the sequence is GARAARFAAPVSGAQQPSASAGAAAAAAAAASAPAAPRSRSLG. The RING-type; atypical zinc finger occupies 195–236; it reads CAICLEELQQGDTIARLPCLCIYHKGCIDEWFEVNRSCPEHP.

In terms of assembly, interacts with UBE2N. Interacts with ZNRF1. Interacts (when phosphorylated) with YWHAE. Post-translationally, phosphorylated; leading to binding to YWHAE. Phosphorylated by MTOR at Ser-147 and dephosphorylated by PP6C. Ser-147 phosphorylation stimulates vesicle-to-cytosol translocation. As to expression, expressed primarily in the nervous system. Expression is more intense in the granular cell layer of hippocampus, Purkinje cell layer of the cerebellum and the granular cell layer of the olfactory bulb. Detected in sensory neurons but not expressed in sympatic or enteric neurons. Expressed in testis, adipose tissue, columnar epithelial cells of the gut.

The protein resides in the endosome membrane. It is found in the lysosome membrane. It localises to the presynaptic cell membrane. Its subcellular location is the cytoplasm. The enzyme catalyses S-ubiquitinyl-[E2 ubiquitin-conjugating enzyme]-L-cysteine + [acceptor protein]-L-lysine = [E2 ubiquitin-conjugating enzyme]-L-cysteine + N(6)-ubiquitinyl-[acceptor protein]-L-lysine.. It functions in the pathway protein modification; protein ubiquitination. E3 ubiquitin-protein ligase that plays a role in the establishment and maintenance of neuronal transmission and plasticity. Ubiquitinates the Na(+)/K(+) ATPase alpha-1 subunit/ATP1A1 and thereby influences its endocytosis and/or degradation. Also acts as a positive regulator of mTORC1 activation by amino acids, which functions upstream of the V-ATPase and of Rag-GTPases. In turn, phosphorylation by mTOR leads to its inhibition via targeting to the cytosol allowing a self-regulating feedback mechanism. In Mus musculus (Mouse), this protein is E3 ubiquitin-protein ligase ZNRF2 (Znrf2).